The following is a 417-amino-acid chain: NADH-quinone oxidoreductase subunit D (417 aa).

It belongs to the complex I 49 kDa subunit family. NDH-1 is composed of 14 different subunits. Subunits NuoB, C, D, E, F, and G constitute the peripheral sector of the complex.

The protein localises to the cell inner membrane. It carries out the reaction a quinone + NADH + 5 H(+)(in) = a quinol + NAD(+) + 4 H(+)(out). Its function is as follows. NDH-1 shuttles electrons from NADH, via FMN and iron-sulfur (Fe-S) centers, to quinones in the respiratory chain. The immediate electron acceptor for the enzyme in this species is believed to be ubiquinone. Couples the redox reaction to proton translocation (for every two electrons transferred, four hydrogen ions are translocated across the cytoplasmic membrane), and thus conserves the redox energy in a proton gradient. In Azoarcus sp. (strain BH72), this protein is NADH-quinone oxidoreductase subunit D.